Consider the following 483-residue polypeptide: tRNA sulfurtransferase (483 aa).

A THUMP domain is found at 62–166 (PEICDALTRI…QDKLILVKAR (105 aa)). ATP is bound by residues 184–185 (LI), Lys-266, Gly-288, and Gln-297. Cys-345 and Cys-457 are oxidised to a cystine. The 79-residue stretch at 405–483 (LADTDVLLDI…GYTNVKVYRP (79 aa)) folds into the Rhodanese domain. The active-site Cysteine persulfide intermediate is Cys-457.

This sequence belongs to the ThiI family.

Its subcellular location is the cytoplasm. The enzyme catalyses [ThiI sulfur-carrier protein]-S-sulfanyl-L-cysteine + a uridine in tRNA + 2 reduced [2Fe-2S]-[ferredoxin] + ATP + H(+) = [ThiI sulfur-carrier protein]-L-cysteine + a 4-thiouridine in tRNA + 2 oxidized [2Fe-2S]-[ferredoxin] + AMP + diphosphate. It carries out the reaction [ThiS sulfur-carrier protein]-C-terminal Gly-Gly-AMP + S-sulfanyl-L-cysteinyl-[cysteine desulfurase] + AH2 = [ThiS sulfur-carrier protein]-C-terminal-Gly-aminoethanethioate + L-cysteinyl-[cysteine desulfurase] + A + AMP + 2 H(+). The protein operates within cofactor biosynthesis; thiamine diphosphate biosynthesis. Functionally, catalyzes the ATP-dependent transfer of a sulfur to tRNA to produce 4-thiouridine in position 8 of tRNAs, which functions as a near-UV photosensor. Also catalyzes the transfer of sulfur to the sulfur carrier protein ThiS, forming ThiS-thiocarboxylate. This is a step in the synthesis of thiazole, in the thiamine biosynthesis pathway. The sulfur is donated as persulfide by IscS. The chain is tRNA sulfurtransferase from Yersinia pseudotuberculosis serotype IB (strain PB1/+).